Reading from the N-terminus, the 551-residue chain is Endolytic murein transglycosylase (551 aa).

At 1-187 the chain is on the cytoplasmic side; that stretch reads MSEKSREEEK…PKKEKKSHVK (187 aa). Residues 38 to 180 are disordered; sequence VRTPANEPSA…EGAKPAKPKK (143 aa). 2 stretches are compositionally biased toward low complexity: residues 100–110 and 145–157; these read PSSPAEESGSR and QAGP…ATET. Over residues 159 to 174 the composition is skewed to basic and acidic residues; it reads DIIRDTSRRSRREGAK. Residues 188–208 form a helical membrane-spanning segment; it reads AFVISFLVFLALLSAGGYFGY. At 209 to 551 the chain is on the extracellular side; it reads QYVLDSLLPI…VAEHVNSKLN (343 aa).

The protein belongs to the transglycosylase MltG family. In terms of assembly, interacts with RodZ. Interacts with MreC in the elongasome; interaction is strongly reduced when the 90 C-terminal residues of MreC are missing. Interacts with KhpB (also called EloR/Jag) via MltG's N-terminus, suggesting the N-terminus of MltG is cytoplasmic.

It localises to the cell membrane. The catalysed reaction is a peptidoglycan chain = a peptidoglycan chain with N-acetyl-1,6-anhydromuramyl-[peptide] at the reducing end + a peptidoglycan chain with N-acetylglucosamine at the non-reducing end.. Its function is as follows. Functions as a peptidoglycan terminase that cleaves nascent peptidoglycan strands endolytically to terminate their elongation. Mutations in this gene suppress deletion of PBP2b (penA); truncation at residue 168, undefined changes between residue Ile-447 and Ala-505, and mutation of Ala-505 suppress the penA deletion. Probably part of the elongasome which synthesizes peripheral peptidoglycan. This chain is Endolytic murein transglycosylase, found in Streptococcus pneumoniae (strain ATCC BAA-255 / R6).